The sequence spans 341 residues: Mytilin-2 (341 aa).

Residues 1–24 form the signal peptide; it reads MFKQSYQLCLVFLLFVCFYQSVKG.

In terms of tissue distribution, component of the organic matrix of calcified shell layers like nacre and prisms.

The protein resides in the secreted. The sequence is that of Mytilin-2 from Mytilus californianus (California mussel).